We begin with the raw amino-acid sequence, 485 residues long: DNA polymerase subunit gamma-2 (485 aa).

The segment at 28 to 67 is disordered; that stretch reads RQPEQLSKGTGSFVGPVRSQAELPRNEPREAPESGGEGSE.

In terms of assembly, heterotrimer composed of a catalytic subunit and a homodimer of accessory subunits (POLG:POLG2).

Its subcellular location is the mitochondrion. It is found in the mitochondrion matrix. It localises to the mitochondrion nucleoid. Accessory subunit of DNA polymerase gamma solely responsible for replication of mitochondrial DNA (mtDNA). Acts as an allosteric regulator of the holoenzyme activities. Enhances the polymerase activity and the processivity of POLG by increasing its interactions with the DNA template. Suppresses POLG exonucleolytic proofreading especially toward homopolymeric templates bearing mismatched termini. Binds to single-stranded DNA. This Bos taurus (Bovine) protein is DNA polymerase subunit gamma-2 (POLG2).